A 489-amino-acid chain; its full sequence is Dihydropyrimidinase 1 (489 aa).

H61, H63, and K156 together coordinate Zn(2+). K156 is modified (N6-carboxylysine). Y161 lines the substrate pocket. Residues H189 and H245 each contribute to the Zn(2+) site. S295 is a binding site for substrate. D323 is a Zn(2+) binding site. N344 serves as a coordination point for substrate.

It belongs to the metallo-dependent hydrolases superfamily. Hydantoinase/dihydropyrimidinase family. As to quaternary structure, homotetramer. The cofactor is Zn(2+). Post-translationally, carboxylation allows a single lysine to coordinate two zinc ions.

Its subcellular location is the nucleus. It catalyses the reaction 5,6-dihydrouracil + H2O = 3-(carbamoylamino)propanoate + H(+). This Caenorhabditis briggsae protein is Dihydropyrimidinase 1 (dhp-1).